A 317-amino-acid polypeptide reads, in one-letter code: MTTEYLDFELPIAELEAKIEALRSAVGNDNKINLDDEIARLQKKSEELTKKTFSDLDAWQISRMARHPSRPYTLDYIERIFTEFDELAGDRAFADDKAIVGGIARLDGRPVMVIGHQKGRTVKEKVKRNFGMPAPEGYRKALRLMQMAERFNMPIITFIDTPGAYPGIGAEERGQSEAIARNLREMSTLKVPVICTVIGEGGSGGALAIGVGDKVNMLQYSTYSVISPEGCASILWKSAEKASTAAEVMGLTAPRLKELELIDNIVPEPLGGAHRNFDEMAANLKQRLLEDLADLDPLNAEALLDRRYQRLMGYGYV.

Residues 33 to 294 (NLDDEIARLQ…KQRLLEDLAD (262 aa)) enclose the CoA carboxyltransferase C-terminal domain.

The protein belongs to the AccA family. As to quaternary structure, acetyl-CoA carboxylase is a heterohexamer composed of biotin carboxyl carrier protein (AccB), biotin carboxylase (AccC) and two subunits each of ACCase subunit alpha (AccA) and ACCase subunit beta (AccD).

Its subcellular location is the cytoplasm. The enzyme catalyses N(6)-carboxybiotinyl-L-lysyl-[protein] + acetyl-CoA = N(6)-biotinyl-L-lysyl-[protein] + malonyl-CoA. Its pathway is lipid metabolism; malonyl-CoA biosynthesis; malonyl-CoA from acetyl-CoA: step 1/1. Functionally, component of the acetyl coenzyme A carboxylase (ACC) complex. First, biotin carboxylase catalyzes the carboxylation of biotin on its carrier protein (BCCP) and then the CO(2) group is transferred by the carboxyltransferase to acetyl-CoA to form malonyl-CoA. In Glaesserella parasuis serovar 5 (strain SH0165) (Haemophilus parasuis), this protein is Acetyl-coenzyme A carboxylase carboxyl transferase subunit alpha.